A 325-amino-acid polypeptide reads, in one-letter code: Flotillin-like protein FloA (325 aa).

2 consecutive transmembrane segments (helical) span residues 4–24 (LGIVFLAAVVLLFVFLFFSFI) and 26–46 (VGLWISAWAAGVRVPLLTLVA).

This sequence belongs to the flotillin-like FloA family. In terms of assembly, homooligomerizes.

It is found in the cell membrane. The protein resides in the membrane raft. Found in functional membrane microdomains (FMM) that may be equivalent to eukaryotic membrane rafts. FMMs are highly dynamic and increase in number as cells age. Flotillins are thought to be important factors in membrane fluidity. This is Flotillin-like protein FloA from Thermus thermophilus (strain ATCC BAA-163 / DSM 7039 / HB27).